The sequence spans 429 residues: Probable electron transfer flavoprotein-quinone oxidoreductase YdiS (429 aa).

FAD is bound at residue 8-22 (AIVVGAGVAGSVAAL).

This sequence belongs to the ETF-QO/FixC family. FAD is required as a cofactor.

Functionally, probably accepts electrons from YdiQ/YdiR and reduces a quinone. This chain is Probable electron transfer flavoprotein-quinone oxidoreductase YdiS (ydiS), found in Escherichia coli (strain K12).